A 119-amino-acid polypeptide reads, in one-letter code: Large ribosomal subunit protein uL18 (119 aa).

The protein belongs to the universal ribosomal protein uL18 family. Part of the 50S ribosomal subunit; part of the 5S rRNA/L5/L18/L25 subcomplex. Contacts the 5S and 23S rRNAs.

Functionally, this is one of the proteins that bind and probably mediate the attachment of the 5S RNA into the large ribosomal subunit, where it forms part of the central protuberance. This is Large ribosomal subunit protein uL18 from Helicobacter pylori (strain HPAG1).